Consider the following 875-residue polypeptide: Neurotrypsin (875 aa).

The first 20 residues, 1-20, serve as a signal peptide directing secretion; that stretch reads MTLARFVLALVLGALPEVVG. Asparagine 26 carries N-linked (GlcNAc...) asparagine glycosylation. Residues 30-87 are disordered; it reads HHRHRHSPPPGPQYPYYLPTHQRPPRTRPPPPLPRFPRPPRALPAQRPHALQAGHTPR. Positions 56–71 are enriched in pro residues; the sequence is TRPPPPLPRFPRPPRA. One can recognise a Kringle domain in the interval 93 to 165; that stretch reads CPAGELWVSV…GKVDWGYCDC (73 aa). 20 cysteine pairs are disulfide-bonded: cysteine 93–cysteine 165, cysteine 109–cysteine 149, cysteine 138–cysteine 163, cysteine 195–cysteine 259, cysteine 208–cysteine 269, cysteine 239–cysteine 249, cysteine 305–cysteine 369, cysteine 318–cysteine 379, cysteine 349–cysteine 359, cysteine 412–cysteine 475, cysteine 425–cysteine 485, cysteine 455–cysteine 465, cysteine 525–cysteine 589, cysteine 538–cysteine 599, cysteine 569–cysteine 579, cysteine 619–cysteine 750, cysteine 661–cysteine 677, cysteine 765–cysteine 831, cysteine 794–cysteine 808, and cysteine 821–cysteine 850. SRCR domains follow at residues 170-271, 280-381, 387-487, and 500-601; these read VRLR…TCSF, IRLV…SCTP, IRLA…ACYP, and VRLM…ICDY. Positions 619–630 are zymogen activation region; that stretch reads CGLRLLHRRQKR. Residues 631-874 form the Peptidase S1 domain; sequence IIGGKNSLRG…FVPWIKSVTK (244 aa). The active-site Charge relay system is the histidine 676. An N-linked (GlcNAc...) asparagine glycan is attached at asparagine 683. Catalysis depends on aspartate 726, which acts as the Charge relay system. The active-site Charge relay system is the serine 825.

It belongs to the peptidase S1 family.

The protein localises to the secreted. Functionally, plays a role in neuronal plasticity and the proteolytic action may subserve structural reorganizations associated with learning and memory operations. This chain is Neurotrypsin (PRSS12), found in Macaca mulatta (Rhesus macaque).